We begin with the raw amino-acid sequence, 45 residues long: Mu-conotoxin-like Cal 12.1.2a (45 aa).

Cystine bridges form between cysteine 3-cysteine 16, cysteine 11-cysteine 28, cysteine 18-cysteine 33, and cysteine 27-cysteine 39. At proline 23 the chain carries 4-hydroxyproline. A 6'-bromotryptophan mark is found at tryptophan 37 and tryptophan 38. A 4-hydroxyproline modification is found at proline 40. The residue at position 44 (tryptophan 44) is a 6'-bromotryptophan.

As to expression, expressed by the venom duct.

The protein localises to the secreted. Its function is as follows. Mu-conotoxins block voltage-gated sodium channels. This toxin reversibly blocks voltage-gated sodium channel in cephalopods, with no alteration in the voltage dependence of sodium conductance or on the kinetics of inactivation. This chain is Mu-conotoxin-like Cal 12.1.2a, found in Californiconus californicus (California cone).